The following is a 110-amino-acid chain: Endoribonuclease SymE (110 aa).

The region spanning 29 to 74 (SRYPEYTRIPAITLKGQWLEDAGFTTGTQVDVRVMNGCIVLTAQQP) is the SpoVT-AbrB domain.

The protein belongs to the SymE family.

It localises to the cytoplasm. Functionally, involved in the degradation and recycling of damaged RNA. It is itself a target for degradation by the ATP-dependent protease Lon. In Salmonella paratyphi C (strain RKS4594), this protein is Endoribonuclease SymE.